The sequence spans 314 residues: Ribosomal protein L11 methyltransferase (314 aa).

S-adenosyl-L-methionine is bound by residues Thr-161, Gly-182, Asp-204, and Asn-248.

It belongs to the methyltransferase superfamily. PrmA family.

It is found in the cytoplasm. The enzyme catalyses L-lysyl-[protein] + 3 S-adenosyl-L-methionine = N(6),N(6),N(6)-trimethyl-L-lysyl-[protein] + 3 S-adenosyl-L-homocysteine + 3 H(+). Functionally, methylates ribosomal protein L11. In Listeria innocua serovar 6a (strain ATCC BAA-680 / CLIP 11262), this protein is Ribosomal protein L11 methyltransferase.